Consider the following 387-residue polypeptide: Fructose-1,6-bisphosphate aldolase/phosphatase (387 aa).

The active-site Proton acceptor; for FBP phosphatase activity is Asp13. Mg(2+)-binding residues include Asp13, His20, Asp54, and Asp55. His20 contributes to the beta-D-fructose 1,6-bisphosphate binding site. His20 lines the dihydroxyacetone phosphate pocket. Tyr92 contacts beta-D-fructose 1,6-bisphosphate. Gln96 is a binding site for Mg(2+). Residue Gly105–Asn106 coordinates beta-D-fructose 1,6-bisphosphate. Asp133 lines the Mg(2+) pocket. Residue Lys134 coordinates beta-D-fructose 1,6-bisphosphate. Lys134 is a dihydroxyacetone phosphate binding site. Catalysis depends on Tyr229, which acts as the Proton donor/acceptor; for FBP aldolase activity. 3 residues coordinate Mg(2+): Lys232, Asp233, and Asp234. Lys232 functions as the Schiff-base intermediate with DHAP; for FBP aldolase activity in the catalytic mechanism. Residues Gln242–Ser243, Arg266, Asp287, and Tyr348 each bind beta-D-fructose 1,6-bisphosphate. Positions 266 and 287 each coordinate dihydroxyacetone phosphate.

Belongs to the FBP aldolase/phosphatase family. In terms of assembly, homooctamer; dimer of tetramers. Mg(2+) is required as a cofactor.

It carries out the reaction beta-D-fructose 1,6-bisphosphate + H2O = beta-D-fructose 6-phosphate + phosphate. The enzyme catalyses beta-D-fructose 1,6-bisphosphate = D-glyceraldehyde 3-phosphate + dihydroxyacetone phosphate. The protein operates within carbohydrate biosynthesis; gluconeogenesis. Catalyzes two subsequent steps in gluconeogenesis: the aldol condensation of dihydroxyacetone phosphate (DHAP) and glyceraldehyde-3-phosphate (GA3P) to fructose-1,6-bisphosphate (FBP), and the dephosphorylation of FBP to fructose-6-phosphate (F6P). In Ignicoccus hospitalis (strain KIN4/I / DSM 18386 / JCM 14125), this protein is Fructose-1,6-bisphosphate aldolase/phosphatase.